The chain runs to 179 residues: Large ribosomal subunit protein uL5 (179 aa).

Belongs to the universal ribosomal protein uL5 family. In terms of assembly, part of the 50S ribosomal subunit; part of the 5S rRNA/L5/L18/L25 subcomplex. Contacts the 5S rRNA and the P site tRNA. Forms a bridge to the 30S subunit in the 70S ribosome.

In terms of biological role, this is one of the proteins that bind and probably mediate the attachment of the 5S RNA into the large ribosomal subunit, where it forms part of the central protuberance. In the 70S ribosome it contacts protein S13 of the 30S subunit (bridge B1b), connecting the 2 subunits; this bridge is implicated in subunit movement. Contacts the P site tRNA; the 5S rRNA and some of its associated proteins might help stabilize positioning of ribosome-bound tRNAs. This Synechococcus sp. (strain RCC307) protein is Large ribosomal subunit protein uL5.